Reading from the N-terminus, the 328-residue chain is GMP reductase (328 aa).

The active-site Thioimidate intermediate is cysteine 176. Position 205 to 228 (205 to 228 (IIADGGIRTHGDVAKSIRFGATMV)) interacts with NADP(+).

The protein belongs to the IMPDH/GMPR family. GuaC type 2 subfamily.

The catalysed reaction is IMP + NH4(+) + NADP(+) = GMP + NADPH + 2 H(+). Its function is as follows. Catalyzes the irreversible NADPH-dependent deamination of GMP to IMP. It functions in the conversion of nucleobase, nucleoside and nucleotide derivatives of G to A nucleotides, and in maintaining the intracellular balance of A and G nucleotides. The sequence is that of GMP reductase from Bacillus thuringiensis (strain Al Hakam).